The following is a 405-amino-acid chain: Arginine deiminase (405 aa).

Cysteine 395 serves as the catalytic Amidino-cysteine intermediate.

It belongs to the arginine deiminase family.

It localises to the cytoplasm. It catalyses the reaction L-arginine + H2O = L-citrulline + NH4(+). Its pathway is amino-acid degradation; L-arginine degradation via ADI pathway; carbamoyl phosphate from L-arginine: step 1/2. In Rhodococcus erythropolis (strain PR4 / NBRC 100887), this protein is Arginine deiminase.